Consider the following 267-residue polypeptide: Levodione reductase (267 aa).

Leu-17–Leu-42 serves as a coordination point for NAD(+). Ser-152 contributes to the substrate binding site. Tyr-165 (proton acceptor) is an active-site residue.

Belongs to the short-chain dehydrogenases/reductases (SDR) family.

The catalysed reaction is (4R)-hydroxy-(6R)-2,2,6-trimethylcyclohexanone + NAD(+) = (6R)-2,2,6-trimethyl-1,4-cyclohexanedione + NADH + H(+). Strongly activated by monovalent cations, such as K(+), Na(+), and NH4(+). Catalyzes the regio- and stereoselective reversible NAD-dependent reduction of (6R)-2,2,6-trimethyl-1,4-cyclohexanedione (levodione) to (4R,6R)-4-hydroxy-2,2,6-trimethylcyclohexanone (actinol). The protein is Levodione reductase (lvr) of Leifsonia aquatica (Corynebacterium aquaticum).